A 333-amino-acid polypeptide reads, in one-letter code: UPF0284 protein VNG_1572C (333 aa).

The protein belongs to the UPF0284 family.

The sequence is that of UPF0284 protein VNG_1572C from Halobacterium salinarum (strain ATCC 700922 / JCM 11081 / NRC-1) (Halobacterium halobium).